Here is a 314-residue protein sequence, read N- to C-terminus: MSSENKKEPLLVITGPTATGKSEVGVLVAEKLGGEIISADSMLIYRGMDIGTAKPTSADRRGIPHHMIDIVEPDQDYNVALYRKQAMAVIKKVLERGNLPIVVGGTGLYIEALIRNYSFGGAGTDKTLRKKLQKEAAESPFLLHQRLAKIDPATASQLHPANTRRVIRALEVYYLTGKPISNFKRLDEPDPPFNLLMFGLTMEREALYRRIEKRVDRMIAMGLIEEVQNLLQRGFSPRLNSMRGLGYKEMISYLNGTLSLEEAVEVLKRNTRRFAKRQMTWFRRYKEIRWLKIENFADCEAIAQEIARCTEGVL.

Residue 15-22 (GPTATGKS) participates in ATP binding. 17–22 (TATGKS) provides a ligand contact to substrate. Residues 40 to 43 (DSML) are interaction with substrate tRNA.

Belongs to the IPP transferase family. Monomer. Mg(2+) is required as a cofactor.

It carries out the reaction adenosine(37) in tRNA + dimethylallyl diphosphate = N(6)-dimethylallyladenosine(37) in tRNA + diphosphate. In terms of biological role, catalyzes the transfer of a dimethylallyl group onto the adenine at position 37 in tRNAs that read codons beginning with uridine, leading to the formation of N6-(dimethylallyl)adenosine (i(6)A). The chain is tRNA dimethylallyltransferase from Pelotomaculum thermopropionicum (strain DSM 13744 / JCM 10971 / SI).